The primary structure comprises 106 residues: Guanyl-specific ribonuclease Th1 (106 aa).

2 disulfides stabilise this stretch: Cys5/Cys103 and Cys23/Cys84. Residue His39 is part of the active site. Residue Glu58 is the Proton acceptor of the active site. His92 (proton donor) is an active-site residue.

The protein belongs to the ribonuclease N1/T1 family.

The catalysed reaction is [RNA] containing guanosine + H2O = an [RNA fragment]-3'-guanosine-3'-phosphate + a 5'-hydroxy-ribonucleotide-3'-[RNA fragment].. The chain is Guanyl-specific ribonuclease Th1 from Trichoderma harzianum (Hypocrea lixii).